Here is a 633-residue protein sequence, read N- to C-terminus: MVLQKRLDYGSHGHRAPIKPRVATLAPVKRSTRIRKKQMYALDLLATAAEKLLADQDNLSSGPNINETPEGYVTSMKPVKAEQFDEAFPLRSVAVKKDDCKGCTVGCAGICGFLRQANMCLAENSSTQNLADSVLESLTAKPDVLAKDSFVSSKKSCRLGFGLGTIPEYGSVGVCQPWSTRSAEVKQVHRARPTAIRSQEDSDAAALCALVETMDLDTKPLAEASSGSNSGVHICGPDRGHNSHPSCLAKVQHAADRDDDENSSGCVHPSTSGNNRGYIPHYIGDRRIRRLFASRLRKAARNRICGEMSCKGNKLSLCEKKMPTTRRRVQQTTLKRKRLAQLYSEKSSDEVKLTIKSFNIPELLIEIPENATVGSLKKTVSDAVTTIIERGLRVGILLQGKNIQNDNKTLRQAGICRGKKLNDIGFTLECEAGQDSHPGVIVPEEMDFVGASVVDKSATVKCEEPAENQQLMQDFPGCSLSDPGSVDYPVEWSTQETSASSQAIVPFADPNSLALANVPLSRSKRPDFGQRRIRRPFTVAEVELLVEAVEHLGTGRWRDVKFRAFENVHHRTYVDLKDKWKTLVHTASIAPQQRRGAPVPQELLDRVLAAQAYWSEQQAKLHGDPPVPEICPT.

Residues histidine 253–serine 272 are disordered. The span at serine 263 to serine 272 shows a compositional bias: polar residues. Residues valine 351 to cysteine 430 enclose the Ubiquitin-like domain. A sufficient for telomeric DNA binding region spans residues proline 506 to serine 615. Residues glycine 529–serine 588 enclose the HTH myb-type domain. The 51-residue stretch at arginine 534–valine 584 folds into the SANT domain. Residues tryptophan 557–valine 584 constitute a DNA-binding region (H-T-H motif).

As to quaternary structure, homodimer. Ubiquitous.

The protein localises to the chromosome. It localises to the telomere. Binds the telomeric double-stranded 5'TTTAGGG-3' repeat and regulates telomere length and structure. This chain is Telomere-binding protein 1 (TBP1), found in Oryza sativa subsp. japonica (Rice).